Reading from the N-terminus, the 1055-residue chain is Activated CDC42 kinase 1 (1055 aa).

Residues 1–110 (MQPEEGTGWL…PSPTPGSLPG (110 aa)) are SAM-like domain. Residues 91 to 110 (SQHSQSTFRKPSPTPGSLPG) form a disordered region. Thr-113 is subject to Phosphothreonine. Residues 126–385 (LRLLEKLGDG…PTFVALRDFL (260 aa)) form the Protein kinase domain. ATP contacts are provided by residues 132–140 (LGDGSFGVV) and Lys-158. Asp-252 serves as the catalytic Proton acceptor. Residue Tyr-284 is modified to Phosphotyrosine; by SRC and autocatalysis. One can recognise an SH3 domain in the interval 388-448 (AQPTDMRALQ…PRNVVTSVAG (61 aa)). The 13-residue stretch at 454–466 (ISQPLQNSFIHTG) folds into the CRIB domain. The segment at 505–548 (RPTQHLGRVKREPPPRPPQPAIFTQKTTYDPVSEDPDPLSSDFK) is disordered. A phosphotyrosine mark is found at Pro-518 and Tyr-533. The required for interaction with SRC stretch occupies residues 638 to 667 (DWDARPLPPPPAYDDVAQDEDDFEVCSINS). The interval 647–650 (PPAY) is required for interaction with NEDD4. A disordered region spans residues 737 to 855 (TGQLTPSPTP…QVIQAPGPRA (119 aa)). The tract at residues 748–891 (GDDKPQVPPR…PYLERYQRFL (144 aa)) is EBD domain. Pro residues-rich tracts occupy residues 753–764 (QVPPRVPIPPRP) and 787–798 (PASPPRVPPREP). Residues 817 to 827 (PLPHRLSSSPG) are compositionally biased toward low complexity. Tyr-842 is modified (phosphotyrosine). The residue at position 854 (Arg-854) is an Omega-N-methylarginine. A phosphotyrosine mark is found at Tyr-874 and Tyr-887. At Ser-896 the chain carries Phosphoserine. Positions 896–952 (SPEEPAALPVPPLLPPPSTPAPAAPTATVRPMPQAAPDPKANFSTNNSNPGARPPSL) are disordered. Residues 903–918 (LPVPPLLPPPSTPAPA) are compositionally biased toward pro residues. Residues 973-1013 (PADKVQMLQAMVHGVTTEECQAALQSHSWSVQRAAQYLKVE) form the UBA domain.

Belongs to the protein kinase superfamily. Tyr protein kinase family. As to quaternary structure, homodimer. Interacts with CSPG4 (activated). Interacts with MERTK (activated); stimulates autophosphorylation. May interact (phosphorylated) with HSP90AB1; maintains kinase activity. Interacts with NPHP1. Interacts with SNX9 (via SH3 domain). Interacts with SRC (via SH2 and SH3 domain). Part of a collagen stimulated complex involved in cell migration composed of CDC42, CRK, TNK2 and BCAR1/p130cas. Interacts with BCAR1/p130cas via SH3 domains. Forms complexes with GRB2 and numerous receptor tyrosine kinases (RTK) including LTK, AXL or PDGFRL, in which GRB2 promotes RTK recruitment by TNK2. Interacts with CDC42. Interacts with EGFR, and this interaction is dependent on EGF stimulation and kinase activity of EGFR. Interacts (via kinase domain) with AKT1. Interacts with NEDD4 (via WW3 domain). NEDD4L and EGF promote association with NEDD4. The cofactor is Mg(2+). Autophosphorylation regulates kinase activity. Phosphorylation on Tyr-533 is required for interaction with SRC and is observed during association with clathrin-coated pits. Post-translationally, polyubiquitinated by NEDD4 and NEDD4L. Degradation can be induced by EGF and is lysosome-dependent. In terms of tissue distribution, ubiquitously present in all tissues tested. Highly expressed in the adult central nervous system (CNS); hippocampus, neocortex, and cerebellum, both at dendritic spines and presynaptic axon terminals. Levels are strongly increased during enhanced neural activity.

The protein localises to the cell membrane. The protein resides in the nucleus. Its subcellular location is the endosome. It is found in the cell junction. It localises to the adherens junction. The protein localises to the cytoplasmic vesicle membrane. The protein resides in the cytoplasmic vesicle. Its subcellular location is the clathrin-coated vesicle. It is found in the membrane. It localises to the clathrin-coated pit. The protein localises to the cytoplasm. The protein resides in the cytosol. It catalyses the reaction L-tyrosyl-[protein] + ATP = O-phospho-L-tyrosyl-[protein] + ADP + H(+). The catalysed reaction is L-seryl-[protein] + ATP = O-phospho-L-seryl-[protein] + ADP + H(+). The enzyme catalyses L-threonyl-[protein] + ATP = O-phospho-L-threonyl-[protein] + ADP + H(+). Functionally, non-receptor tyrosine-protein and serine/threonine-protein kinase that is implicated in cell spreading and migration, cell survival, cell growth and proliferation. Transduces extracellular signals to cytosolic and nuclear effectors. Phosphorylates AKT1, AR, MCF2, WASL and WWOX. Implicated in trafficking and clathrin-mediated endocytosis through binding to epidermal growth factor receptor (EGFR) and clathrin. Binds to both poly- and mono-ubiquitin and regulates ligand-induced degradation of EGFR, thereby contributing to the accumulation of EGFR at the limiting membrane of early endosomes. Downstream effector of CDC42 which mediates CDC42-dependent cell migration via phosphorylation of BCAR1. May be involved both in adult synaptic function and plasticity and in brain development. Activates AKT1 by phosphorylating it on 'Tyr-176'. Phosphorylates AR on 'Tyr-267' and 'Tyr-363' thereby promoting its recruitment to androgen-responsive enhancers (AREs). Phosphorylates WWOX on 'Tyr-287'. Phosphorylates MCF2, thereby enhancing its activity as a guanine nucleotide exchange factor (GEF) toward Rho family proteins. Contributes to the control of AXL receptor levels. Confers metastatic properties on cancer cells and promotes tumor growth by negatively regulating tumor suppressor such as WWOX and positively regulating pro-survival factors such as AKT1 and AR. In Mus musculus (Mouse), this protein is Activated CDC42 kinase 1 (Tnk2).